The following is a 277-amino-acid chain: Large ribosomal subunit protein uL2 (277 aa).

The disordered stretch occupies residues 223–264 (VAMNPVDHPHGGGEGKTAAGRHPVSPWGTPSKGSRTRRNKRT).

It belongs to the universal ribosomal protein uL2 family. As to quaternary structure, part of the 50S ribosomal subunit. Forms a bridge to the 30S subunit in the 70S ribosome.

One of the primary rRNA binding proteins. Required for association of the 30S and 50S subunits to form the 70S ribosome, for tRNA binding and peptide bond formation. It has been suggested to have peptidyltransferase activity; this is somewhat controversial. Makes several contacts with the 16S rRNA in the 70S ribosome. The polypeptide is Large ribosomal subunit protein uL2 (Nitrosomonas eutropha (strain DSM 101675 / C91 / Nm57)).